A 120-amino-acid chain; its full sequence is Large ribosomal subunit protein bL12 (120 aa).

Residues 95–112 (KEGVSKEEAEEVQGKLEE) are compositionally biased toward basic and acidic residues. A disordered region spans residues 95 to 120 (KEGVSKEEAEEVQGKLEEAGASVEVK).

The protein belongs to the bacterial ribosomal protein bL12 family. In terms of assembly, homodimer. Part of the ribosomal stalk of the 50S ribosomal subunit. Forms a multimeric L10(L12)X complex, where L10 forms an elongated spine to which 2 to 4 L12 dimers bind in a sequential fashion. Binds GTP-bound translation factors.

In terms of biological role, forms part of the ribosomal stalk which helps the ribosome interact with GTP-bound translation factors. Is thus essential for accurate translation. The chain is Large ribosomal subunit protein bL12 from Oceanobacillus iheyensis (strain DSM 14371 / CIP 107618 / JCM 11309 / KCTC 3954 / HTE831).